The chain runs to 131 residues: Secreted RxLR effector protein 45 (131 aa).

An N-terminal signal peptide occupies residues 1–16 (MSIFIFISLVLGLAHQ). Residues 56–59 (RPLR) carry the RxLR motif. N-linked (GlcNAc...) asparagine glycosylation is present at N128.

This sequence belongs to the RxLR effector family.

Its subcellular location is the secreted. The protein localises to the host nucleus. Secreted effector that completely suppresses the host cell death induced by cell death-inducing proteins. The polypeptide is Secreted RxLR effector protein 45 (Plasmopara viticola (Downy mildew of grapevine)).